Here is a 6885-residue protein sequence, read N- to C-terminus: Nesprin-2 (6885 aa).

The tract at residues 1–286 (MASSPELPTE…YVAQFLQYSK (286 aa)) is actin-binding. The Cytoplasmic segment spans residues 1 to 6834 (MASSPELPTE…QRSFLSRVVR (6834 aa)). 2 consecutive Calponin-homology (CH) domains span residues 31-136 (DTQK…LHFH) and 181-286 (MSAR…QYSK). 7 Spectrin repeats span residues 297 to 378 (GKVK…HQIN), 379 to 472 (AWKI…RINN), 473 to 575 (ILEK…KNIY), 576 to 680 (NVKS…KQDQ), 735 to 838 (VAKD…KNLT), 839 to 932 (DVSP…LHHE), and 933 to 1034 (LSLY…KCAS). The stretch at 297–6782 (GKVKDAMGWL…PASPLPSFDE (6486 aa)) forms a coiled coil. Phosphoserine is present on Ser-841. Position 955 is an N6-acetyllysine (Lys-955). Positions 1042 to 1059 (PTAGGTSKNEGTITTSEN) are enriched in polar residues. Positions 1042-1084 (PTAGGTSKNEGTITTSENRGGDPHSEAPFAKSDNQPSTEKAME) are disordered. 12 Spectrin repeats span residues 1121–1212 (TYRD…TLNT), 1263–1323 (NIQD…DTLK), 1324–1419 (ALED…YGVQ), 1420–1524 (EEFT…ALVT), 1525–1636 (ECLE…KTED), 1637–1738 (YYEN…TGES), 1739–1830 (NCHA…TKKS), 1831–1938 (VLQD…AKEL), 1939–2036 (EDSL…EEED), 2037–2132 (KLLP…LAST), 2133–2243 (YLSH…SVQN), and 2244–2360 (LDGH…LNSI). The span at 2368–2382 (EKKGKFTLPGREKQA) shows a compositional bias: basic and acidic residues. Residues 2368–2394 (EKKGKFTLPGREKQATSDVQESTQESA) are disordered. Polar residues predominate over residues 2383–2393 (TSDVQESTQES). Spectrin repeat units lie at residues 2432–2513 (DERK…TLKK), 2514–2620 (NKES…KYSQ), 2621–2717 (QVVE…ETLE), 2718–2831 (PLHL…QLEF), 2832–2933 (KLEE…FIQN), 2934–3036 (TCNE…EKIK), 3037–3142 (QLDT…NMVL), 3143–3248 (ELSP…DLRT), 3249–3352 (NVLN…AQET), 3353–3465 (EAER…MWCE), 3466–3573 (ELKQ…KVQK), 3574–3679 (NKEL…SNEV), 3680–3777 (LKSS…ECRT), 3778–3880 (SQLN…KIME), 3881–3986 (SLPQ…VTQE), and 3987–4086 (QNEL…LPAV). The residue at position 2781 (Ser-2781) is a Phosphoserine. 2 stretches are compositionally biased toward basic and acidic residues: residues 4073–4083 (QEQEGVERDRL) and 4093–4102 (VAERDASERK). Disordered stretches follow at residues 4073-4162 (QEQE…SGTI), 4184-4232 (DSLN…KTRP), 4335-4363 (EKHS…PVNL), and 4416-4448 (HDND…QGQN). The residue at position 4108 (Ser-4108) is a Phosphoserine. 2 stretches are compositionally biased toward basic and acidic residues: residues 4122-4134 (SSVK…EKAE) and 4144-4155 (WKHDKDMEEDRA). One copy of the Spectrin 36 repeat lies at 4229–4348 (KTRPEPTEVL…EDQHPTILKK (120 aa)). A compositionally biased stretch (basic and acidic residues) spans 4335-4356 (EKHSEDQHPTILKKSSEPEHQE). Polar residues predominate over residues 4421–4434 (TQESSASNQASSPE). Spectrin repeat units follow at residues 4520–4639 (NMTE…RSYQ), 4640–4727 (NEIK…RARY), 4728–4837 (TELS…QSLL), 4838–4943 (QKWE…QALL), 4944–5051 (KHLL…QEKL), 5052–5164 (HQLQ…KIQH), 5165–5266 (LEQL…TQVN), 5267–5391 (QLKT…KAYS), 5392–5487 (NAHG…MLLV), 5488–5589 (KANE…CSEL), 5590–5704 (QGIG…QWQD), 5705–5799 (FTTS…PQLA), 5800–5907 (EMIK…RVAI), 5908–6017 (RKQE…VKKL), 6018–6135 (KETF…EETW), 6136–6243 (RLWQ…LRHF), and 6244–6355 (TNQR…PGLE). Residue Ser-5785 is modified to Phosphoserine. Residues 6354–6367 (LEDEKEASENETDM) show a composition bias toward acidic residues. The interval 6354–6508 (LEDEKEASEN…GTDGGKEGPR (155 aa)) is disordered. Ser-6361, Ser-6384, Ser-6411, Ser-6428, Ser-6429, Ser-6430, and Ser-6459 each carry phosphoserine. Residues 6368 to 6384 (EDPREIQTDSWRKRGES) show a composition bias toward basic and acidic residues. 3 Spectrin repeats span residues 6461–6549 (SCPE…KLKI), 6550–6665 (KQNL…QCQD), and 6666–6782 (FHQL…SFDE). Residues 6463–6474 (PEHHYKQMEGDR) are compositionally biased toward basic and acidic residues. Positions 6477–6489 (PPVPPASSTPYKP) are enriched in pro residues. Positions 6490–6499 (PYGKLLLPPG) are enriched in low complexity. The interval 6769-6824 (GTQNPASPLPSFDEVDSGDQPPATSVPAPRAKQFRAVRTTEGEEETESRVPGSTRP) is disordered. In terms of domain architecture, KASH spans 6826-6885 (RSFLSRVVRAALPLQLLLLLLLLLACLLPSSEEDYSCTQANNFARSFYPMLRYTNGPPPT). The helical; Anchor for type IV membrane protein transmembrane segment at 6835-6855 (AALPLQLLLLLLLLLACLLPS) threads the bilayer. Over 6856-6885 (SEEDYSCTQANNFARSFYPMLRYTNGPPPT) the chain is Perinuclear space. The interval 6872 to 6885 (FYPMLRYTNGPPPT) is sufficient for interaction with SUN2.

This sequence belongs to the nesprin family. In terms of assembly, core component of LINC complexes which are composed of inner nuclear membrane SUN domain-containing proteins coupled to outer nuclear membrane KASH domain-containing nesprins. SUN and KASH domain-containing proteins seem to bind each other promiscuously; however, some LINC complex constituents are tissue- or cell type-specific. At least SUN1/2-containing core LINC complexes are proposed to be hexameric composed of three protomers of each KASH and SUN domain-containing protein. The SUN2:SYNE2/KASH2 complex is a heterohexamer; the homotrimeric cloverleave-like conformation of the SUN domain is a prerequisite for LINC complex formation in which three separate SYNE2/KASH2 peptides bind at the interface of adjacent SUN domains. Interacts with EMD, LMNA, MKS3 and F-actin via its N-terminal domain. Interacts with DCTN1 and DYNC1I1/2; suggesting the association with the dynein-dynactin motor complex. Associates with kinesin motor complexes. Interacts with TMEM67. Interacts (via KASH domain) with TMEM258. Interacts with BROX; this interaction promotes SYN2 ubiquitination and facilitates the relaxation of mechanical stress imposed by compressive actin fibers at the rupture site. The disulfid bond with SUN2 is required for stability of the SUN2:SYNE2/KASH2 LINC complex under tensile forces though not required for the interaction. In terms of processing, ubiquitinated, targeting it for degradation. Widely expressed, with higher level in kidney, adult and fetal liver, stomach and placenta. Weakly expressed in skeletal muscle and brain. Isoform 5 is highly expressed in pancreas, skeletal muscle and heart.

The protein resides in the nucleus outer membrane. Its subcellular location is the sarcoplasmic reticulum membrane. It localises to the cell membrane. It is found in the cytoplasm. The protein localises to the cytoskeleton. The protein resides in the mitochondrion. Its subcellular location is the nucleus. It localises to the nucleoplasm. It is found in the myofibril. The protein localises to the sarcomere. The protein resides in the z line. Its subcellular location is the cell junction. It localises to the focal adhesion. Its function is as follows. Multi-isomeric modular protein which forms a linking network between organelles and the actin cytoskeleton to maintain the subcellular spatial organization. As a component of the LINC (LInker of Nucleoskeleton and Cytoskeleton) complex involved in the connection between the nuclear lamina and the cytoskeleton. The nucleocytoplasmic interactions established by the LINC complex play an important role in the transmission of mechanical forces across the nuclear envelope and in nuclear movement and positioning. Specifically, SYNE2 and SUN2 assemble in arrays of transmembrane actin-associated nuclear (TAN) lines which are bound to F-actin cables and couple the nucleus to retrograde actin flow during actin-dependent nuclear movement. May be involved in nucleus-centrosome attachment. During interkinetic nuclear migration (INM) at G2 phase and nuclear migration in neural progenitors its LINC complex association with SUN1/2 and probable association with cytoplasmic dynein-dynactin motor complexes functions to pull the nucleus toward the centrosome; SYNE1 and SYNE2 may act redundantly. During INM at G1 phase mediates respective LINC complex association with kinesin to push the nucleus away from the centrosome. Involved in nuclear migration in retinal photoreceptor progenitors. Required for centrosome migration to the apical cell surface during early ciliogenesis. Facilitates the relaxation of mechanical stress imposed by compressive actin fibers at the rupture site through its nteraction with SYN2. The chain is Nesprin-2 from Homo sapiens (Human).